Here is a 633-residue protein sequence, read N- to C-terminus: Carbon catabolite-derepressing protein kinase (633 aa).

The span at 1 to 16 (MSSNNNTNTAPANANS) shows a compositional bias: low complexity. The interval 1–46 (MSSNNNTNTAPANANSSHHHHHHHHHHHHHGHGGSNSTLNNPKSSL) is disordered. Positions 17 to 32 (SHHHHHHHHHHHHHGH) are enriched in basic residues. Residues 55–306 (YQIVKTLGEG…IHEIMQDDWF (252 aa)) form the Protein kinase domain. ATP contacts are provided by residues 61–69 (LGEGSFGKV) and Lys84. The Proton acceptor role is filled by Asp177. Thr210 carries the phosphothreonine; by autocatalysis modification. The interval 313–392 (YLLPPDLKPH…YMLIKENKSL (80 aa)) is auto-inhibitory domain (AID). Residues 317-345 (PDLKPHPEEENENNDSKKDGSSPDNDEID) are disordered. Residues 319-337 (LKPHPEEENENNDSKKDGS) are compositionally biased toward basic and acidic residues. In terms of domain architecture, UBA spans 348–389 (LVNILSSTMGYEKDEIYESLESSEDTPAFNEIRDAYMLIKEN). Residues 409–434 (FLSQSPPTFQQQSKSHQKSQVDHETA) are disordered. Ser413 is subject to Phosphoserine. Residue Lys461 forms a Glycyl lysine isopeptide (Lys-Gly) (interchain with G-Cter in ubiquitin) linkage. Ser487 bears the Phosphoserine mark. Lys549 participates in a covalent cross-link: Glycyl lysine isopeptide (Lys-Gly) (interchain with G-Cter in SUMO). Ser632 carries the phosphoserine modification.

It belongs to the protein kinase superfamily. CAMK Ser/Thr protein kinase family. SNF1 subfamily. Component of the AMP-activated protein kinase complex also known as the SNF1 kinase complex (Snf1c), a heterotrimeric complex composed of an alpha subunit (SNF1), a regulatory subunit beta (GAL83 and substoichiometric alternate beta subunits SIP1 and SIP2), and a regulatory subunit gamma (SNF4). Interacts with the transcriptional activator SIP4. Interacts with SAK1. Interacts with CTK1: Interacts with adenylate cyclase CYR1. Post-translationally, phosphorylation at Thr-210 in response to glucose limitation leads to activation of kinase activity. ADP, but not AMP, protects the enzyme from dephosphorylation at Thr-210 by GLC7. Sumoylation by the SUMO (E3) ligase MMS21 leads to inhibition by interaction of SUMO attached to Lys-549 with a SUMO-interacting sequence motif located near the active site of SNF1, and by targeting SNF1 for glucose-induced destruction via the SLX5-SLX8 (SUMO-directed) ubiquitin ligase.

It is found in the cytoplasm. It localises to the nucleus. Its subcellular location is the nucleus membrane. The enzyme catalyses L-seryl-[protein] + ATP = O-phospho-L-seryl-[protein] + ADP + H(+). It catalyses the reaction L-threonyl-[protein] + ATP = O-phospho-L-threonyl-[protein] + ADP + H(+). Its activity is regulated as follows. The kinase activity is positively regulated by SNF4 via sequestration of the SNF1 auto-inhibitory domain (AID). Its function is as follows. Serine/threonine protein kinase essential for release from glucose repression. Catalytic subunit of the AMP-activated protein kinase complex also known as the SNF1 kinase complex (Snf1c), a central regulator of cellular energy homeostasis, which, in response to a fall in intracellular ATP levels, activates energy-producing pathways and inhibits energy-consuming processes. The complex phosphorylates histone H3 to form H3S10ph, which promotes H3K14ac formation, leading to transcriptional activation through TBP recruitment to the promoters. The complex also negatively regulates the HOG1 MAPK pathway in ER stress response including unfolded protein response (UPR). Under nutrient/energy depletion, the complex phosphorylates and activates PAS kinase PSK1 which in turn activates PBS1, leading to the inhibition of the TORC1 signaling pathway. SNF1 also interacts and phosphorylates adenylate cyclase CYR1 and negatively regulates the protein kinase A signaling pathway. Also phosphorylates and regulates the transcriptional activator CAT8. This Saccharomyces cerevisiae (strain ATCC 204508 / S288c) (Baker's yeast) protein is Carbon catabolite-derepressing protein kinase.